A 420-amino-acid polypeptide reads, in one-letter code: Histidine--tRNA ligase (420 aa).

It belongs to the class-II aminoacyl-tRNA synthetase family. In terms of assembly, homodimer.

The protein localises to the cytoplasm. The catalysed reaction is tRNA(His) + L-histidine + ATP = L-histidyl-tRNA(His) + AMP + diphosphate + H(+). This is Histidine--tRNA ligase from Macrococcus caseolyticus (strain JCSC5402) (Macrococcoides caseolyticum).